A 192-amino-acid polypeptide reads, in one-letter code: Cytidylate kinase (192 aa).

ATP is bound at residue 12–20; that stretch reads GLAGSGTTT.

This sequence belongs to the cytidylate kinase family. Type 2 subfamily.

The protein localises to the cytoplasm. The catalysed reaction is CMP + ATP = CDP + ADP. It carries out the reaction dCMP + ATP = dCDP + ADP. This Pyrococcus furiosus (strain ATCC 43587 / DSM 3638 / JCM 8422 / Vc1) protein is Cytidylate kinase.